The chain runs to 240 residues: Tetraspanin-1 (240 aa).

Topologically, residues 1 to 9 (MQCFSFIKT) are cytoplasmic. The chain crosses the membrane as a helical span at residues 10–30 (IMILFNLLIFLCGAALLAVGI). The Extracellular portion of the chain corresponds to 31-52 (WVSIDGASFLKIFGPLSSSAMQ). A helical membrane pass occupies residues 53-73 (FVNVGYFLIAAGAVVFALGFL). Over 74–88 (GCYGAQTESKCALMT) the chain is Cytoplasmic. Residues 89–109 (FFFILLLIFIAEVAAAVVALV) traverse the membrane as a helical segment. Residues 110–210 (YTTMAEHFLT…QQLLYDIRTN (101 aa)) are Extracellular-facing. A glycan (N-linked (GlcNAc...) asparagine) is linked at Asn154. A helical transmembrane segment spans residues 211–231 (AVTVGGVAAGIGGLELAAMIV). The Cytoplasmic segment spans residues 232–240 (SMYLYCNLQ).

Belongs to the tetraspanin (TM4SF) family. In terms of assembly, interacts with SLC19A2. Interacts with NTRK1/TRKA.

The protein resides in the lysosome membrane. Structural component of specialized membrane microdomains known as tetraspanin-enriched microdomains (TERMs), which act as platforms for receptor clustering and signaling. Participates thereby in diverse biological functions such as cell signal transduction, adhesion, migration and protein trafficking. Regulates neuronal differentiation in response to NGF by facilitating NGF-mediated activation of NTRK1/TRKA receptor tyrosine kinase and subsequent downstream signaling pathways. Plays a role in the inhibition of TNFalpha-induced apoptosis. Mechanistically, inhibits the NF-kappa-B signaling pathway by blocking phosphorylation of CHUK. Also promotes the stability of the thiamine transporter 1/SLC19A2 in intestinal epithelial cells leading to an increase of thiamine uptake process. This chain is Tetraspanin-1 (TSPAN1), found in Macaca fascicularis (Crab-eating macaque).